The chain runs to 620 residues: Translocator protein BipB (620 aa).

The interval 58–95 is disordered; the sequence is QCDAQPAAHDARLDDKPALRAPQERDAPPLGASDTGSR. A compositionally biased stretch (basic and acidic residues) spans 66-84; it reads HDARLDDKPALRAPQERDA. A coiled-coil region spans residues 309-339; it reads EMQAKREAELQKKSDEYQAQVKKAEEMQKTM. 3 consecutive transmembrane segments (helical) span residues 355–375, 401–421, and 430–450; these read FAAAAFTGGASLALAAVGLAL, AILKPLMEMISSLITKALVAC, and LAGAILGAVVTGVALVAAAFV.

It belongs to the SctE/SipB/YopB family.

The protein localises to the secreted. It is found in the host membrane. Functionally, plays a role in the bacterium-induced formation of multinucleated giant cell (MNGC), which is formed after host cell fusion, as well as in the intercellular spreading of bacteria and in the induction of apoptosis in macrophages. May act in concert with other effector proteins to induce fusion of host cell membranes. The chain is Translocator protein BipB (bipB) from Burkholderia pseudomallei (strain 1106a).